The chain runs to 945 residues: MSNKKADSKPQAKYPVNLLDTPFPMRGDLPKREPQWVKEWEERGIYEKIRAASKGRPKFILHDGPPYANGDIHLGHAVNKILKDIVVKSRNMAGFDAPYVPGWDCHGMPIEIQIEKQFGKSLPAAEVMSKARAYATEQIEKQKVGFKRLGVLGDWANPYKTMNFVNEAEEIRALGKIIEKGYVYRGLKPVNWCFDCGSALAEAEVEYKDRTDPTIDVMFAFAEPEKTAHAFGLPALPRAEGGIVIWTTTPWTIPANQALNLHPEIIYALVDTERGLLIIAQERVEACMADFKLTGRVVATAPGVKLANLRFHHPLASAHPGYKRTAPVYLGDYVTTDTGTGVVHSSPAYGIEDFMSCKAHGMTDSDIINPVMGDGRYIESLPLFGGLSIWDANPKVVDALNAAGSLLRSEKYTHSYMHCWRHKTPIIYRATSQWFAGMDVTPQDGGKTLRETALEGIDATAFYPSWGKQRLFSMIANRPDWTLSRQRQWGVPMAFFVHKETGELHPRTLELLEEVAKRVEQSGIEAWQSLDPRELIGDDANLYEKNRDTLDVWFDSGTTHWHVLRGSHKDQLQFPADLYLEGSDQHRGWFHSSLLTASMIDGRAPYKGLLTHGFTVDGEGRKMSKSLGNGIDPHEVANRLGAEIIRLWIASTDYSGELAISEEILKRVTEGYRRIRNTLRFLLANLSDFDFAQHAVPVDEWLEIDRYAVAFSQQLQTELLGHYEKYEFHPVVAKLQTYCSEDLGGFYLDVLKDRLYTSAADSRARRSAQTALYHLTHGLLRVLAPFLSFTAEEAWKVFQPASDTIFTETYYAYPEVAGSAALIEKWALLRDVRGNVTKALEEARTANRIGSSLQAEVAVHASGARYDALTSLGDDLKFVLITSAATVVKVDDEAQESVDVAASKYQKCERCWHYREDVGAHADHPTLCGRCFSNLFENGEIRSAA.

The 'HIGH' region motif lies at 66-76 (PYANGDIHLGH). E581 is an L-isoleucyl-5'-AMP binding site. Positions 622–626 (KMSKS) match the 'KMSKS' region motif. An ATP-binding site is contributed by K625. Residues C908, C911, C928, and C931 each coordinate Zn(2+).

The protein belongs to the class-I aminoacyl-tRNA synthetase family. IleS type 1 subfamily. As to quaternary structure, monomer. The cofactor is Zn(2+).

It localises to the cytoplasm. It catalyses the reaction tRNA(Ile) + L-isoleucine + ATP = L-isoleucyl-tRNA(Ile) + AMP + diphosphate. In terms of biological role, catalyzes the attachment of isoleucine to tRNA(Ile). As IleRS can inadvertently accommodate and process structurally similar amino acids such as valine, to avoid such errors it has two additional distinct tRNA(Ile)-dependent editing activities. One activity is designated as 'pretransfer' editing and involves the hydrolysis of activated Val-AMP. The other activity is designated 'posttransfer' editing and involves deacylation of mischarged Val-tRNA(Ile). This Burkholderia orbicola (strain MC0-3) protein is Isoleucine--tRNA ligase.